We begin with the raw amino-acid sequence, 261 residues long: tRNA U34 carboxymethyltransferase (261 aa).

Carboxy-S-adenosyl-L-methionine is bound by residues Lys25, Trp39, Lys44, Gly63, 114–115 (VE), Tyr135, and Arg250.

The protein belongs to the class I-like SAM-binding methyltransferase superfamily. CmoB family. As to quaternary structure, homotetramer.

It carries out the reaction carboxy-S-adenosyl-L-methionine + 5-hydroxyuridine(34) in tRNA = 5-carboxymethoxyuridine(34) in tRNA + S-adenosyl-L-homocysteine + H(+). Catalyzes carboxymethyl transfer from carboxy-S-adenosyl-L-methionine (Cx-SAM) to 5-hydroxyuridine (ho5U) to form 5-carboxymethoxyuridine (cmo5U) at position 34 in tRNAs. The protein is tRNA U34 carboxymethyltransferase of Helicobacter pylori (strain ATCC 700392 / 26695) (Campylobacter pylori).